An 88-amino-acid chain; its full sequence is Large ribosomal subunit protein bL27 (88 aa).

The disordered stretch occupies residues 1-26 (MAHKKGASSSSNGRDSEAKRLGVKRF).

It belongs to the bacterial ribosomal protein bL27 family.

This chain is Large ribosomal subunit protein bL27, found in Corynebacterium glutamicum (strain R).